Here is a 644-residue protein sequence, read N- to C-terminus: 1-deoxy-D-xylulose-5-phosphate synthase (644 aa).

Residues H72 and G113–A115 each bind thiamine diphosphate. D144 provides a ligand contact to Mg(2+). Residues G145–A146, N174, Y287, and E370 contribute to the thiamine diphosphate site. N174 provides a ligand contact to Mg(2+).

Belongs to the transketolase family. DXPS subfamily. As to quaternary structure, homodimer. Mg(2+) serves as cofactor. Thiamine diphosphate is required as a cofactor.

The enzyme catalyses D-glyceraldehyde 3-phosphate + pyruvate + H(+) = 1-deoxy-D-xylulose 5-phosphate + CO2. It participates in metabolic intermediate biosynthesis; 1-deoxy-D-xylulose 5-phosphate biosynthesis; 1-deoxy-D-xylulose 5-phosphate from D-glyceraldehyde 3-phosphate and pyruvate: step 1/1. Functionally, catalyzes the acyloin condensation reaction between C atoms 2 and 3 of pyruvate and glyceraldehyde 3-phosphate to yield 1-deoxy-D-xylulose-5-phosphate (DXP). This is 1-deoxy-D-xylulose-5-phosphate synthase from Prochlorococcus marinus (strain MIT 9303).